Here is a 154-residue protein sequence, read N- to C-terminus: Myoglobin (154 aa).

Residues Gly2 to Lys148 enclose the Globin domain. A phosphoserine mark is found at Ser4 and Ser32. His65 lines the nitrite pocket. O2 is bound at residue His65. Thr68 bears the Phosphothreonine mark. His94 contacts heme b. Phosphoserine occurs at positions 121 and 133.

It belongs to the globin family. Monomeric.

The protein resides in the cytoplasm. Its subcellular location is the sarcoplasm. The catalysed reaction is Fe(III)-heme b-[protein] + nitric oxide + H2O = Fe(II)-heme b-[protein] + nitrite + 2 H(+). It catalyses the reaction H2O2 + AH2 = A + 2 H2O. Its function is as follows. Monomeric heme protein which primary function is to store oxygen and facilitate its diffusion within muscle tissues. Reversibly binds oxygen through a pentacoordinated heme iron and enables its timely and efficient release as needed during periods of heightened demand. Depending on the oxidative conditions of tissues and cells, and in addition to its ability to bind oxygen, it also has a nitrite reductase activity whereby it regulates the production of bioactive nitric oxide. Under stress conditions, like hypoxia and anoxia, it also protects cells against reactive oxygen species thanks to its pseudoperoxidase activity. This Rattus norvegicus (Rat) protein is Myoglobin.